The primary structure comprises 185 residues: Translation initiation factor IF-3 (185 aa).

The protein belongs to the IF-3 family. As to quaternary structure, monomer.

The protein resides in the cytoplasm. IF-3 binds to the 30S ribosomal subunit and shifts the equilibrium between 70S ribosomes and their 50S and 30S subunits in favor of the free subunits, thus enhancing the availability of 30S subunits on which protein synthesis initiation begins. The sequence is that of Translation initiation factor IF-3 from Bacteroides thetaiotaomicron (strain ATCC 29148 / DSM 2079 / JCM 5827 / CCUG 10774 / NCTC 10582 / VPI-5482 / E50).